The sequence spans 320 residues: Probable trehalose-phosphate phosphatase C (320 aa).

The protein belongs to the trehalose phosphatase family. A divalent metal cation serves as cofactor.

The catalysed reaction is alpha,alpha-trehalose 6-phosphate + H2O = alpha,alpha-trehalose + phosphate. The protein operates within glycan biosynthesis; trehalose biosynthesis. In terms of biological role, removes the phosphate from trehalose 6-phosphate to produce free trehalose. Trehalose accumulation in plant may improve abiotic stress tolerance. This is Probable trehalose-phosphate phosphatase C (TPPC) from Arabidopsis thaliana (Mouse-ear cress).